The chain runs to 466 residues: Argininosuccinate lyase (466 aa).

This sequence belongs to the lyase 1 family. Argininosuccinate lyase subfamily.

The protein resides in the cytoplasm. The catalysed reaction is 2-(N(omega)-L-arginino)succinate = fumarate + L-arginine. It participates in amino-acid biosynthesis; L-arginine biosynthesis; L-arginine from L-ornithine and carbamoyl phosphate: step 3/3. The polypeptide is Argininosuccinate lyase (Desulfovibrio desulfuricans (strain ATCC 27774 / DSM 6949 / MB)).